Reading from the N-terminus, the 202-residue chain is ATP-dependent Clp protease proteolytic subunit (202 aa).

Catalysis depends on serine 101, which acts as the Nucleophile. Residue histidine 126 is part of the active site.

It belongs to the peptidase S14 family. Component of the chloroplastic Clp protease core complex.

Its subcellular location is the plastid. The protein localises to the chloroplast stroma. The catalysed reaction is Hydrolysis of proteins to small peptides in the presence of ATP and magnesium. alpha-casein is the usual test substrate. In the absence of ATP, only oligopeptides shorter than five residues are hydrolyzed (such as succinyl-Leu-Tyr-|-NHMec, and Leu-Tyr-Leu-|-Tyr-Trp, in which cleavage of the -Tyr-|-Leu- and -Tyr-|-Trp bonds also occurs).. Cleaves peptides in various proteins in a process that requires ATP hydrolysis. Has a chymotrypsin-like activity. Plays a major role in the degradation of misfolded proteins. This chain is ATP-dependent Clp protease proteolytic subunit, found in Buxus microphylla (Littleleaf boxwood).